We begin with the raw amino-acid sequence, 188 residues long: Elongation factor P (188 aa).

N6-(3,6-diaminohexanoyl)-5-hydroxylysine is present on Lys-34.

Belongs to the elongation factor P family. In terms of processing, may be beta-lysylated on the epsilon-amino group of Lys-34 by the combined action of EpmA and EpmB, and then hydroxylated on the C5 position of the same residue by EpmC (if this protein is present). Lysylation is critical for the stimulatory effect of EF-P on peptide-bond formation. The lysylation moiety may extend toward the peptidyltransferase center and stabilize the terminal 3-CCA end of the tRNA. Hydroxylation of the C5 position on Lys-34 may allow additional potential stabilizing hydrogen-bond interactions with the P-tRNA.

It localises to the cytoplasm. It functions in the pathway protein biosynthesis; polypeptide chain elongation. Involved in peptide bond synthesis. Alleviates ribosome stalling that occurs when 3 or more consecutive Pro residues or the sequence PPG is present in a protein, possibly by augmenting the peptidyl transferase activity of the ribosome. Modification of Lys-34 is required for alleviation. The chain is Elongation factor P from Hamiltonella defensa subsp. Acyrthosiphon pisum (strain 5AT).